We begin with the raw amino-acid sequence, 399 residues long: MAQRNCWRRSWLGVGGGLCLGAHGAARGPRQLFHLTAKQSSAASDAKCRRWRAAGRGGGAGGVYNGRGAAAGSRQTSGMAHNEHPHYKFFESKKASLVMAPFSGGQGKSGVEDGPKYLLKQGLREGVEGLGWEIEVQRPLDGHDFEERKQRATEVVGRAKNPTLVGEATHLIHDAVRAAAHAGRLPVTLGGDHSIAIGTVSGVLDRYPDAGLLWVDAHADINTLASTESGNLHGCPVSFLMGLERESWPAPLAWVPGTLRPSKIAYIGLRDVDPEEKEILRRLGITAFSMYHVDRYGINKVVEMALAAINPDGTGPVMVSYDVDAIDPMYVPATGTPVRGGLTLREGLFIVERVAETGNLVALDVVECNPELAAHDLHVVDTVQTGCSIARCALGETLL.

Mn(2+) is bound by residues His193, Asp216, His218, and Asp220. Residues 218-222 (HADIN), 229-231 (SGN), and Asp273 each bind substrate. 2 residues coordinate Mn(2+): Asp322 and Asp324. Residues Thr336 and Glu367 each contribute to the substrate site.

This sequence belongs to the arginase family. The cofactor is Mn(2+).

It is found in the cytoplasm. It carries out the reaction L-arginine + H2O = urea + L-ornithine. The protein operates within nitrogen metabolism; urea cycle; L-ornithine and urea from L-arginine: step 1/1. The chain is Arginase (CAR1) from Eremothecium gossypii (strain ATCC 10895 / CBS 109.51 / FGSC 9923 / NRRL Y-1056) (Yeast).